Reading from the N-terminus, the 104-residue chain is ATP-dependent Clp protease adapter protein ClpS (104 aa).

It belongs to the ClpS family. In terms of assembly, binds to the N-terminal domain of the chaperone ClpA.

In terms of biological role, involved in the modulation of the specificity of the ClpAP-mediated ATP-dependent protein degradation. The sequence is that of ATP-dependent Clp protease adapter protein ClpS from Oleidesulfovibrio alaskensis (strain ATCC BAA-1058 / DSM 17464 / G20) (Desulfovibrio alaskensis).